The chain runs to 340 residues: Phenylalanine--tRNA ligase alpha subunit (340 aa).

Glu254 lines the Mg(2+) pocket.

This sequence belongs to the class-II aminoacyl-tRNA synthetase family. Phe-tRNA synthetase alpha subunit type 1 subfamily. In terms of assembly, tetramer of two alpha and two beta subunits. Mg(2+) is required as a cofactor.

The protein localises to the cytoplasm. It carries out the reaction tRNA(Phe) + L-phenylalanine + ATP = L-phenylalanyl-tRNA(Phe) + AMP + diphosphate + H(+). The chain is Phenylalanine--tRNA ligase alpha subunit from Acidithiobacillus ferrooxidans (strain ATCC 23270 / DSM 14882 / CIP 104768 / NCIMB 8455) (Ferrobacillus ferrooxidans (strain ATCC 23270)).